A 358-amino-acid chain; its full sequence is Ethanol acetyltransferase 1 (358 aa).

The region spanning 59–166 (PIVFIHGLFG…NAPINQPHIS (108 aa)) is the AB hydrolase-1 domain. Residues serine 132, aspartate 156, and histidine 305 each act as charge relay system in the active site.

The protein belongs to the AB hydrolase superfamily.

The protein resides in the mitochondrion. It catalyses the reaction ethanol + acetyl-CoA = ethyl acetate + CoA. The enzyme catalyses acetyl-CoA + H2O = acetate + CoA + H(+). The catalysed reaction is ethyl acetate + H2O = ethanol + acetate + H(+). Its function is as follows. Alcohol acetyltransferase that catalyzes the synthesis of ethyl acetate from ethanol and acetyl-CoA. Can also function as a thioesterase by hydrolyzing acetyl-CoA in the absence of ethanol, as well as esterase hydrolyzing ethyl acetate. This is Ethanol acetyltransferase 1 (EAT1) from Eremothecium cymbalariae (strain CBS 270.75 / DBVPG 7215 / KCTC 17166 / NRRL Y-17582) (Yeast).